The sequence spans 507 residues: Histidine ammonia-lyase (507 aa).

The segment at residues 141 to 143 is a cross-link (5-imidazolinone (Ala-Gly)); the sequence is ASG. Ser-142 bears the 2,3-didehydroalanine (Ser) mark.

Belongs to the PAL/histidase family. Contains an active site 4-methylidene-imidazol-5-one (MIO), which is formed autocatalytically by cyclization and dehydration of residues Ala-Ser-Gly.

It is found in the cytoplasm. It catalyses the reaction L-histidine = trans-urocanate + NH4(+). Its pathway is amino-acid degradation; L-histidine degradation into L-glutamate; N-formimidoyl-L-glutamate from L-histidine: step 1/3. The polypeptide is Histidine ammonia-lyase (Burkholderia pseudomallei (strain 668)).